We begin with the raw amino-acid sequence, 266 residues long: Electron transfer flavoprotein subunit beta (266 aa).

This sequence belongs to the ETF beta-subunit/FixA family. As to quaternary structure, heterodimer of an alpha and a beta subunit. It depends on FAD as a cofactor. AMP serves as cofactor.

Functionally, the electron transfer flavoprotein serves as a specific electron acceptor for other dehydrogenases. It transfers the electrons to the main respiratory chain via ETF-ubiquinone oxidoreductase (ETF dehydrogenase). The protein is Electron transfer flavoprotein subunit beta (etfB) of Mycobacterium leprae (strain TN).